A 365-amino-acid chain; its full sequence is UDP-N-acetylglucosamine--N-acetylmuramyl-(pentapeptide) pyrophosphoryl-undecaprenol N-acetylglucosamine transferase (365 aa).

UDP-N-acetyl-alpha-D-glucosamine-binding positions include 19–21 (TGG), N131, R170, S201, I255, 274–279 (ALTVTE), and Q300.

The protein belongs to the glycosyltransferase 28 family. MurG subfamily.

The protein localises to the cell inner membrane. It carries out the reaction di-trans,octa-cis-undecaprenyl diphospho-N-acetyl-alpha-D-muramoyl-L-alanyl-D-glutamyl-meso-2,6-diaminopimeloyl-D-alanyl-D-alanine + UDP-N-acetyl-alpha-D-glucosamine = di-trans,octa-cis-undecaprenyl diphospho-[N-acetyl-alpha-D-glucosaminyl-(1-&gt;4)]-N-acetyl-alpha-D-muramoyl-L-alanyl-D-glutamyl-meso-2,6-diaminopimeloyl-D-alanyl-D-alanine + UDP + H(+). Its pathway is cell wall biogenesis; peptidoglycan biosynthesis. Its function is as follows. Cell wall formation. Catalyzes the transfer of a GlcNAc subunit on undecaprenyl-pyrophosphoryl-MurNAc-pentapeptide (lipid intermediate I) to form undecaprenyl-pyrophosphoryl-MurNAc-(pentapeptide)GlcNAc (lipid intermediate II). This is UDP-N-acetylglucosamine--N-acetylmuramyl-(pentapeptide) pyrophosphoryl-undecaprenol N-acetylglucosamine transferase from Acinetobacter baumannii (strain ATCC 17978 / DSM 105126 / CIP 53.77 / LMG 1025 / NCDC KC755 / 5377).